A 613-amino-acid polypeptide reads, in one-letter code: Zinc metalloproteinase-disintegrin-like VMP-III (613 aa).

The first 20 residues, 1–20 (MIQVLLVTLCLAAFPYQGSS), serve as a signal peptide directing secretion. A propeptide spanning residues 21–190 (IILDSGNVND…KKASQLVVTP (170 aa)) is cleaved from the precursor. A Peptidase M12B domain is found at 200-396 (KYIELVIVAD…NRPPCILNKP (197 aa)). A Ca(2+)-binding site is contributed by glutamate 203. The N-linked (GlcNAc...) asparagine glycan is linked to asparagine 219. Aspartate 287 serves as a coordination point for Ca(2+). Intrachain disulfides connect cysteine 311/cysteine 391, cysteine 351/cysteine 375, and cysteine 353/cysteine 358. Histidine 336 lines the Zn(2+) pocket. Glutamate 337 is an active-site residue. Zn(2+)-binding residues include histidine 340 and histidine 346. Residues cysteine 391, asparagine 394, valine 406, asparagine 409, phenylalanine 411, glutamate 413, glutamate 416, and aspartate 419 each contribute to the Ca(2+) site. The region spanning 404-490 (PPVCGNYFVE…ECPTDDFQRN (87 aa)) is the Disintegrin domain. 14 disulfide bridges follow: cysteine 407–cysteine 436, cysteine 418–cysteine 431, cysteine 420–cysteine 426, cysteine 430–cysteine 453, cysteine 444–cysteine 450, cysteine 449–cysteine 475, cysteine 462–cysteine 482, cysteine 469–cysteine 501, cysteine 494–cysteine 506, cysteine 513–cysteine 563, cysteine 528–cysteine 574, cysteine 541–cysteine 551, cysteine 558–cysteine 600, and cysteine 594–cysteine 606. The D/ECD-tripeptide signature appears at 468 to 470 (ECD). Residue asparagine 503 is glycosylated (N-linked (GlcNAc...) asparagine).

This sequence belongs to the venom metalloproteinase (M12B) family. P-III subfamily. P-IIIa sub-subfamily. Monomer. Requires Zn(2+) as cofactor. In terms of tissue distribution, expressed by the venom gland.

It is found in the secreted. Its function is as follows. Snake venom metalloproteinase that impairs hemostasis in the envenomed animal. This Agkistrodon piscivorus leucostoma (Western cottonmouth) protein is Zinc metalloproteinase-disintegrin-like VMP-III.